A 68-amino-acid chain; its full sequence is Large ribosomal subunit protein uL29 (68 aa).

This sequence belongs to the universal ribosomal protein uL29 family.

The sequence is that of Large ribosomal subunit protein uL29 from Chloroflexus aurantiacus (strain ATCC 29364 / DSM 637 / Y-400-fl).